A 201-amino-acid polypeptide reads, in one-letter code: 3-isopropylmalate dehydratase small subunit (201 aa).

This sequence belongs to the LeuD family. LeuD type 1 subfamily. Heterodimer of LeuC and LeuD.

The enzyme catalyses (2R,3S)-3-isopropylmalate = (2S)-2-isopropylmalate. It functions in the pathway amino-acid biosynthesis; L-leucine biosynthesis; L-leucine from 3-methyl-2-oxobutanoate: step 2/4. Functionally, catalyzes the isomerization between 2-isopropylmalate and 3-isopropylmalate, via the formation of 2-isopropylmaleate. The chain is 3-isopropylmalate dehydratase small subunit from Shewanella sp. (strain MR-7).